Consider the following 131-residue polypeptide: Profilin-1 (131 aa).

It belongs to the profilin family. Occurs in many kinds of cells as a complex with monomeric actin in a 1:1 ratio.

It localises to the cytoplasm. The protein resides in the cytoskeleton. Its function is as follows. Binds to actin and affects the structure of the cytoskeleton. At high concentrations, profilin prevents the polymerization of actin, whereas it enhances it at low concentrations. By binding to PIP2, it inhibits the formation of IP3 and DG. This Lilium longiflorum (Trumpet lily) protein is Profilin-1.